The following is a 323-amino-acid chain: MAPKQDPKPKFQEGERVLCFHGPLLYEAKCVKVAIKDKQVKYFIHHSGWNKNWDEWVPESRVLKYVDTNLQKQRELQKANQEQYAEGKMRGAAPGKKTSGLQQKNVDVKTKKNKQKTPGNGDGGSTSETPQPPRKKRARVDPTVENEETFMNRVEVKVKIPEELKPWLVDDWDLITRQKQLFYLPAKKNVDSILEDYANYKKSRGNTDNKEYAVNEVVAGIKEYFNVMLGTQLLYKFERPQYAEILADHPDAPMSQVYGAPHLLRLFVRIGAMLAYTPLDEKSLALLLNYLHDFLKYLAKNSATLFSASDYEVAPPEYHRKAV.

A Tudor-knot domain is found at 12 to 62 (QEGERVLCFHGPLLYEAKCVKVAIKDKQVKYFIHHSGWNKNWDEWVPESRV). A disordered region spans residues 76 to 143 (LQKANQEQYA…RKKRARVDPT (68 aa)). Residues 94–227 (PGKKTSGLQQ…VAGIKEYFNV (134 aa)) are sufficient for interaction with SIN3A. The Nuclear localization signal signature appears at 96–107 (KKTSGLQQKNVD). Residue Lys-104 is modified to N6-acetyllysine. Residues 125–191 (STSETPQPPR…FYLPAKKNVD (67 aa)) are interaction with RB1-1. Positions 149 to 303 (TFMNRVEVKV…FLKYLAKNSA (155 aa)) are sufficient for interaction with PHF12. The region spanning 152 to 323 (NRVEVKVKIP…APPEYHRKAV (172 aa)) is the MRG domain. The tract at residues 284 to 305 (LALLLNYLHDFLKYLAKNSATL) is interaction with RB1-2.

In terms of assembly, component of the NuA4 histone acetyltransferase complex which contains the catalytic subunit KAT5/TIP60 and the subunits EP400, TRRAP/PAF400, BRD8/SMAP, EPC1, DMAP1/DNMAP1, RUVBL1/TIP49, RUVBL2, ING3, actin, ACTL6A/BAF53A, MORF4L1/MRG15, MORF4L2/MRGX, MRGBP, YEATS4/GAS41, VPS72/YL1 and MEAF6. The NuA4 complex interacts with MYC and the adenovirus E1A protein. MORF4L1 may also participate in the formation of NuA4 related complexes which lack the KAT5/TIP60 catalytic subunit, but which include the SWI/SNF related protein SRCAP. Component of the mSin3A histone deacetylase complex, which includes SIN3A, HDAC2, ARID4B, MORF4L1, RBBP4/RbAp48, and RBBP7/RbAp46. May also interact with PHF12 and one or more as yet undefined members of the TLE (transducin-like enhancer of split) family of transcriptional repressors. Component of the SIN3B complex, which includes SIN3B, HDAC2 or HDAC1, PHF12 and MORF4L1. Interacts with RB1 and KAT8. Interacts with the N-terminus of MRFAP1. Found in a complex composed of MORF4L1, MRFAP1 and RB1. Interacts with the entire BRCA complex, which contains BRCA1, PALB2, BRCA2 and RAD51. Interacts with PALB2. Forms a complex with MSL1 and NUPR1.

It is found in the nucleus. Component of the NuA4 histone acetyltransferase (HAT) complex which is involved in transcriptional activation of select genes principally by acetylation of nucleosomal histones H4 and H2A. This modification may both alter nucleosome - DNA interactions and promote interaction of the modified histones with other proteins which positively regulate transcription. This complex may be required for the activation of transcriptional programs associated with oncogene and proto-oncogene mediated growth induction, tumor suppressor mediated growth arrest and replicative senescence, apoptosis, and DNA repair. The NuA4 complex ATPase and helicase activities seem to be, at least in part, contributed by the association of RUVBL1 and RUVBL2 with EP400. NuA4 may also play a direct role in DNA repair when directly recruited to sites of DNA damage. As part of the SIN3B complex represses transcription and counteracts the histone acetyltransferase activity of EP300 through the recognition H3K27ac marks by PHF12 and the activity of the histone deacetylase HDAC2. SIN3B complex is recruited downstream of the constitutively active genes transcriptional start sites through interaction with histones and mitigates histone acetylation and RNA polymerase II progression within transcribed regions contributing to the regulation of transcription. Required for homologous recombination repair (HRR) and resistance to mitomycin C (MMC). Involved in the localization of PALB2, BRCA2 and RAD51, but not BRCA1, to DNA-damage foci. This chain is Mortality factor 4-like protein 1 (MORF4L1), found in Pongo abelii (Sumatran orangutan).